Here is a 159-residue protein sequence, read N- to C-terminus: Crossover junction endodeoxyribonuclease RuvC (159 aa).

Residues Asp7, Glu66, and Asp139 contribute to the active site. Mg(2+) is bound by residues Asp7, Glu66, and Asp139.

It belongs to the RuvC family. In terms of assembly, homodimer which binds Holliday junction (HJ) DNA. The HJ becomes 2-fold symmetrical on binding to RuvC with unstacked arms; it has a different conformation from HJ DNA in complex with RuvA. In the full resolvosome a probable DNA-RuvA(4)-RuvB(12)-RuvC(2) complex forms which resolves the HJ. Mg(2+) serves as cofactor.

The protein localises to the cytoplasm. The enzyme catalyses Endonucleolytic cleavage at a junction such as a reciprocal single-stranded crossover between two homologous DNA duplexes (Holliday junction).. In terms of biological role, the RuvA-RuvB-RuvC complex processes Holliday junction (HJ) DNA during genetic recombination and DNA repair. Endonuclease that resolves HJ intermediates. Cleaves cruciform DNA by making single-stranded nicks across the HJ at symmetrical positions within the homologous arms, yielding a 5'-phosphate and a 3'-hydroxyl group; requires a central core of homology in the junction. The consensus cleavage sequence is 5'-(A/T)TT(C/G)-3'. Cleavage occurs on the 3'-side of the TT dinucleotide at the point of strand exchange. HJ branch migration catalyzed by RuvA-RuvB allows RuvC to scan DNA until it finds its consensus sequence, where it cleaves and resolves the cruciform DNA. In Sulfurovum sp. (strain NBC37-1), this protein is Crossover junction endodeoxyribonuclease RuvC.